Consider the following 262-residue polypeptide: Cutinase 1 (262 aa).

Residue Tyr-61 coordinates poly(ethylene terephthalate). Residue Ser-131 is the Nucleophile of the active site. Met-132 and Trp-156 together coordinate poly(ethylene terephthalate). Active-site charge relay system residues include Asp-177 and His-209. Cys-242 and Cys-260 are joined by a disulfide.

This sequence belongs to the AB hydrolase superfamily.

The protein localises to the secreted. It localises to the periplasm. It catalyses the reaction (ethylene terephthalate)(n) + H2O = (ethylene terephthalate)(n-1) + 4-[(2-hydroxyethoxy)carbonyl]benzoate + H(+). It carries out the reaction a butanoate ester + H2O = an aliphatic alcohol + butanoate + H(+). The catalysed reaction is an acetyl ester + H2O = an aliphatic alcohol + acetate + H(+). The enzyme catalyses cutin + H2O = cutin monomers.. In terms of biological role, catalyzes the hydrolysis of cutin, a polyester that forms the structure of plant cuticle. Shows esterase activity towards p-nitrophenol-linked aliphatic esters (pNP-aliphatic esters). Capable of degrading the plastic poly(ethylene terephthalate) (PET), the most abundant polyester plastic in the world. Capable of degrading the bioplastic poly(lactic acid) (PLLA). The chain is Cutinase 1 from Thermobifida cellulosilytica.